We begin with the raw amino-acid sequence, 247 residues long: Granzyme B(G,H) (247 aa).

A signal peptide spans 1 to 18; that stretch reads MKILLLLLTLSLASRTKA. Positions 19–20 are cleaved as a propeptide — activation peptide; sequence GE. The Peptidase S1 domain occupies 21-245; the sequence is IIGGHEVKPH…FLSWIKKTMK (225 aa). Cys49 and Cys65 are oxidised to a cystine. The Charge relay system role is filled by His64. The N-linked (GlcNAc...) asparagine glycan is linked to Asn71. Asp108 functions as the Charge relay system in the catalytic mechanism. Disulfide bonds link Cys142/Cys209 and Cys173/Cys188. A glycan (N-linked (GlcNAc...) asparagine) is linked at Asn182. The Charge relay system role is filled by Ser203.

Belongs to the peptidase S1 family. Granzyme subfamily.

It is found in the secreted. The protein localises to the cytolytic granule. The enzyme catalyses Preferential cleavage: -Asp-|-Xaa- &gt;&gt; -Asn-|-Xaa- &gt; -Met-|-Xaa-, -Ser-|-Xaa-.. Its activity is regulated as follows. Inactivated by the serine protease inhibitor diisopropylfluorophosphate. In terms of biological role, abundant protease in the cytosolic granules of cytotoxic T-cells and NK-cells which activates caspase-independent pyroptosis when delivered into the target cell through the immunological synapse. It cleaves after Asp. Once delivered into the target cell, acts by catalyzing cleavage of gasdermin-E (GSDME), releasing the pore-forming moiety of GSDME, thereby triggering pyroptosis and target cell death. Seems to be linked to an activation cascade of caspases (aspartate-specific cysteine proteases) responsible for apoptosis execution. Cleaves caspase-3 and -9 (CASP3 and CASP9, respectively) to give rise to active enzymes mediating apoptosis. Cleaves and activates CASP7 in response to bacterial infection, promoting plasma membrane repair. This is Granzyme B(G,H) (Gzmb) from Mus musculus (Mouse).